The following is a 453-amino-acid chain: Growth/differentiation factor 9 (453 aa).

A signal peptide spans 1–27 (MALPNKFFLWFCCFAWLCFPISLDSLP). A propeptide spanning residues 28–318 (SRGEAQIVAR…EGVRSSRHRR (291 aa)) is cleaved from the precursor. N-linked (GlcNAc...) asparagine glycans are attached at residues asparagine 163, asparagine 236, asparagine 255, and asparagine 269. The interval 282 to 328 (LHPKRKPSQGPDQRRELSAYPVGEEAAEGVRSSRHRRDQESVSSELK) is disordered. Basic and acidic residues predominate over residues 318–328 (RDQESVSSELK). N-linked (GlcNAc...) asparagine glycosylation occurs at asparagine 337. 3 disulfide bridges follow: cysteine 352-cysteine 418, cysteine 381-cysteine 450, and cysteine 385-cysteine 452.

This sequence belongs to the TGF-beta family. As to quaternary structure, homodimer or heterodimer (Potential). But, in contrast to other members of this family, cannot be disulfide-linked. Phosphorylated; phosphorylation is critical for GDF9 function.

The protein localises to the secreted. Its function is as follows. Required for ovarian folliculogenesis. The protein is Growth/differentiation factor 9 (GDF9) of Capra hircus (Goat).